The chain runs to 145 residues: Superoxide dismutase [Mn/Fe] (145 aa).

Histidine 10 and histidine 64 together coordinate Fe(3+). Mn(2+)-binding residues include histidine 10 and histidine 64.

The protein belongs to the iron/manganese superoxide dismutase family. Requires Mn(2+) as cofactor. Fe(3+) is required as a cofactor.

The catalysed reaction is 2 superoxide + 2 H(+) = H2O2 + O2. Functionally, destroys superoxide anion radicals which are normally produced within the cells and which are toxic to biological systems. Catalyzes the dismutation of superoxide anion radicals into O2 and H2O2 by successive reduction and oxidation of the transition metal ion at the active site. This is Superoxide dismutase [Mn/Fe] (sodA) from Streptococcus parasanguinis.